The primary structure comprises 878 residues: Fanconi-associated nuclease 1 homolog (878 aa).

Residues 32–59 form a UBZ4-type zinc finger; it reads GKTCPLCNIKFSLASYRSHMNVCKVADD. Zn(2+) is bound by residues Cys35, Cys38, His50, and Cys54. The interval 88–180 is disordered; the sequence is ENSGQEIPVN…QKSQSESQEA (93 aa). A compositionally biased stretch (basic and acidic residues) spans 142-161; it reads SEVRSVEKEIKKSPVWENRR. Positions 168–179 are enriched in low complexity; it reads QNSQKSQSESQE. Mn(2+) contacts are provided by Glu695, Asp823, Glu838, and Val839. One can recognise a VRR-NUC domain in the interval 757-870; it reads QETIEDNIRR…GIKAEVCHVE (114 aa).

The protein belongs to the FAN1 family. The cofactor is Mn(2+). It depends on Mg(2+) as a cofactor.

The protein localises to the nucleus. The enzyme catalyses Hydrolytically removes 5'-nucleotides successively from the 3'-hydroxy termini of 3'-hydroxy-terminated oligonucleotides.. In terms of biological role, nuclease required for the repair of DNA interstrand cross-links (ICL). Acts as a 5'-3' exonuclease that anchors at a cut end of DNA and cleaves DNA successively at every third nucleotide, allowing to excise an ICL from one strand through flanking incisions. The sequence is that of Fanconi-associated nuclease 1 homolog (fan-1) from Caenorhabditis briggsae.